The primary structure comprises 1013 residues: Prominin-like protein (1013 aa).

The helical transmembrane segment at 32–52 (IAYLAICGLSVAIFGFALATL) threads the bilayer. 2 N-linked (GlcNAc...) asparagine glycosylation sites follow: asparagine 99 and asparagine 116. The next 3 helical transmembrane spans lie at 215–235 (CGICLLILIIGLIFGIIIAFV), 489–509 (VVSLIVCLLILLVLFILIFAL), and 535–555 (LLLAILLIFCVFSFIALVGLF). N-linked (GlcNAc...) asparagine glycosylation is found at asparagine 576, asparagine 618, asparagine 803, and asparagine 824. Residues 852–872 (INGFWVGILLCALLFLPILFV) form a helical membrane-spanning segment. The interval 918–1013 (ANVPKKRRKA…YYYPGASEQD (96 aa)) is disordered. N-linked (GlcNAc...) asparagine glycosylation occurs at asparagine 949. The segment covering 950–963 (RSGGDRGGGGGDGA) has biased composition (gly residues).

It belongs to the prominin family.

Its subcellular location is the membrane. This chain is Prominin-like protein, found in Drosophila melanogaster (Fruit fly).